The following is a 327-amino-acid chain: Malate dehydrogenase (327 aa).

Residue G11–G17 participates in NAD(+) binding. Substrate-binding residues include R92 and R98. Residues N105, Q112, and V129–N131 each bind NAD(+). Substrate is bound by residues N131 and R162. The Proton acceptor role is filled by H187.

Belongs to the LDH/MDH superfamily. MDH type 2 family.

It carries out the reaction (S)-malate + NAD(+) = oxaloacetate + NADH + H(+). Its function is as follows. Catalyzes the reversible oxidation of malate to oxaloacetate. The sequence is that of Malate dehydrogenase from Leptospira biflexa serovar Patoc (strain Patoc 1 / Ames).